Here is a 556-residue protein sequence, read N- to C-terminus: Oxygen-dependent choline dehydrogenase (556 aa).

6 to 35 (DYIIIGAGSAGNVLAARLTEDPGVSVLLLE) provides a ligand contact to FAD. His-475 serves as the catalytic Proton acceptor.

It belongs to the GMC oxidoreductase family. FAD is required as a cofactor.

The enzyme catalyses choline + A = betaine aldehyde + AH2. It carries out the reaction betaine aldehyde + NAD(+) + H2O = glycine betaine + NADH + 2 H(+). Its pathway is amine and polyamine biosynthesis; betaine biosynthesis via choline pathway; betaine aldehyde from choline (cytochrome c reductase route): step 1/1. In terms of biological role, involved in the biosynthesis of the osmoprotectant glycine betaine. Catalyzes the oxidation of choline to betaine aldehyde and betaine aldehyde to glycine betaine at the same rate. The polypeptide is Oxygen-dependent choline dehydrogenase (Xanthomonas campestris pv. campestris (strain 8004)).